The chain runs to 543 residues: MSMFCFQCQETAKGTGCILSGVCGKTPEVANMQDLLLFVVRGIAVYNQALRKDGRSSARADKFIFDALFTTITNANFDKHSIIEKIKKGLELKKDLSNQVTIEHAPDECTWYGDETEFEEKAQTVGVLRTSDEDIRSLKELVHYGIKGMAAYVEHAYNLGYENPEIFAFMQYALAELTREDITVDELITLTLATGNHGVQAMAQLDTANTSHYGNPEISEVNIGVRNNPGILVSGHDLKDIEELLQQTEGTGIDIYTHSEMLPAHYYPQLKKYKHLAGNYGNAWWKQKEEFESFNGPILFTTNCIVPPRPNATYKDRIYTTGATGLEGATYIPERKDGKQKDFSVIIEHARRCQPPVAIESGKIVGGFAHAQVIALADKVVEAVKSGAIRKFFVMAGCDGRMKSRSYYTEFAEKLPADTVILTAGCAKYRYNKLPLGDINGIPRVLDAGQCNDSYSLAIIAMKLQEVFGLKDINDLPIVYNIAWYEQKAVIVLLALLALGVKKIHLGPTLPAFLSPNVKQVLIDNFGIGGISTADEDIAKFLA.

The [4Fe-4S] cluster site is built by cysteine 5, cysteine 8, cysteine 17, and cysteine 23. Histidine 236, glutamate 260, cysteine 304, cysteine 398, cysteine 426, cysteine 451, glutamate 486, and lysine 488 together coordinate hybrid [4Fe-2O-2S] cluster. Position 398 is a cysteine persulfide (cysteine 398).

The protein belongs to the HCP family. [4Fe-4S] cluster is required as a cofactor. The cofactor is hybrid [4Fe-2O-2S] cluster.

Its subcellular location is the cytoplasm. The enzyme catalyses A + NH4(+) + H2O = hydroxylamine + AH2 + H(+). In terms of biological role, catalyzes the reduction of hydroxylamine to form NH(3) and H(2)O. The chain is Hydroxylamine reductase from Bacteroides fragilis (strain YCH46).